The primary structure comprises 221 residues: DNA mismatch repair protein MutH (221 aa).

It belongs to the MutH family.

Its subcellular location is the cytoplasm. Functionally, sequence-specific endonuclease that cleaves unmethylated GATC sequences. It is involved in DNA mismatch repair. This is DNA mismatch repair protein MutH from Vibrio cholerae serotype O1 (strain ATCC 39315 / El Tor Inaba N16961).